A 117-amino-acid chain; its full sequence is Minor capsid protein VP2 (117 aa).

This sequence belongs to the lagovirus VP2 protein family. As to quaternary structure, homooligomer. The portal-like structure consists in 12 copies of VP2. Interacts with capsid protein VP1.

It is found in the virion. Its subcellular location is the host cytoplasm. Functionally, minor structural protein that forms a portal-like structure at a unique three-fold axis of symmetry, following binding to the host receptor. The channel formed by VP2 may allow the delivery of the viral genome through the host endosomal membrane. The chain is Minor capsid protein VP2 from Oryctolagus cuniculus (Rabbit).